Here is a 598-residue protein sequence, read N- to C-terminus: Serine/threonine-protein kinase PLK1 (598 aa).

Residues 1–26 (MAQVAGKKLTVAPEAGKPPGIPGSSS) are disordered. 2 positions are modified to phosphoserine: serine 25 and serine 26. Residues 44-296 (YLRGRFLGKG…IDDLLNDEFF (253 aa)) enclose the Protein kinase domain. Residues 50-58 (LGKGGFAKC), lysine 73, and glutamate 122 contribute to the ATP site. The Proton acceptor role is filled by aspartate 167. ATP contacts are provided by residues 169-172 (KLGN) and aspartate 185. The interval 185 to 212 (DFGLATKVEYDGERKKTLCGTPNYIAPE) is activation loop. Threonine 201 bears the Phosphothreonine mark. Phosphoserine; by autocatalysis is present on residues serine 260 and serine 326. The D-box that targets the protein for proteasomal degradation in anaphase signature appears at 328-331 (RKPL). The interval 336 to 360 (KGQDSPLVEKQSVPAKEEEMQQPES) is disordered. The residue at position 340 (serine 340) is a Phosphoserine. The POLO box 1 domain maps to 404-482 (WVSKWVDYSD…LKYFRNYMSE (79 aa)). The linker stretch occupies residues 487–501 (AGANITPREGDELAR). Residues 504–586 (FLRTWFRTRS…ARTMVEKLQS (83 aa)) enclose the POLO box 2 domain. The interval 532 to 534 (HTK) is important for interaction with phosphorylated proteins.

It belongs to the protein kinase superfamily. Ser/Thr protein kinase family. As to quaternary structure, interacts with plk1 and kif2a. Interacts with fbxo5. Post-translationally, activated by phosphorylation on Thr-201 during M phase. In terms of processing, protein levels are down-regulated by proteasomal degradation in anaphase.

The protein localises to the nucleus. It localises to the cytoplasm. Its subcellular location is the cytoskeleton. It is found in the microtubule organizing center. The protein resides in the centrosome. The protein localises to the spindle. It localises to the midbody. The catalysed reaction is L-seryl-[protein] + ATP = O-phospho-L-seryl-[protein] + ADP + H(+). It catalyses the reaction L-threonyl-[protein] + ATP = O-phospho-L-threonyl-[protein] + ADP + H(+). In terms of biological role, plays multiple essential roles during mitosis. Phosphorylates the N-terminal domain of cdc25, which leads to cyclin b-cdc2 activation and mitotic entry. Also required for organization of bipolar spindles, and for exit from mitosis. Phosphorylates tpx2. This is Serine/threonine-protein kinase PLK1 (plk1) from Xenopus tropicalis (Western clawed frog).